We begin with the raw amino-acid sequence, 807 residues long: Probable phosphoketolase (807 aa).

Belongs to the XFP family. Thiamine diphosphate serves as cofactor.

The sequence is that of Probable phosphoketolase from Mesorhizobium japonicum (strain LMG 29417 / CECT 9101 / MAFF 303099) (Mesorhizobium loti (strain MAFF 303099)).